A 213-amino-acid chain; its full sequence is Protein SRN2 (213 aa).

The 86-residue stretch at 128–213 (SKYVASWQDY…TWDKQGNLKY (86 aa)) folds into the VPS37 C-terminal domain.

It belongs to the VPS37 family. As to quaternary structure, component of the ESCRT-I complex (endosomal sorting complex required for transport I) which consists of STP22, VPS28, SRN2 and MVB12 in a 1:1:1:1 stoichiometry. Interacts with STP22 and MVB12.

It is found in the cytoplasm. Its subcellular location is the endosome. It localises to the late endosome membrane. In terms of biological role, component of the ESCRT-I complex, a regulator of vesicular trafficking process. Required for normal endocytic and biosynthetic traffic to the yeast vacuole. In Saccharomyces cerevisiae (strain ATCC 204508 / S288c) (Baker's yeast), this protein is Protein SRN2 (SRN2).